We begin with the raw amino-acid sequence, 282 residues long: Phosphatidylserine decarboxylase proenzyme (282 aa).

Residues Asp85, His142, and Ser244 each act as charge relay system; for autoendoproteolytic cleavage activity in the active site. The active-site Schiff-base intermediate with substrate; via pyruvic acid; for decarboxylase activity is Ser244. A Pyruvic acid (Ser); by autocatalysis modification is found at Ser244.

It belongs to the phosphatidylserine decarboxylase family. PSD-B subfamily. Prokaryotic type I sub-subfamily. In terms of assembly, heterodimer of a large membrane-associated beta subunit and a small pyruvoyl-containing alpha subunit. The cofactor is pyruvate. In terms of processing, is synthesized initially as an inactive proenzyme. Formation of the active enzyme involves a self-maturation process in which the active site pyruvoyl group is generated from an internal serine residue via an autocatalytic post-translational modification. Two non-identical subunits are generated from the proenzyme in this reaction, and the pyruvate is formed at the N-terminus of the alpha chain, which is derived from the carboxyl end of the proenzyme. The autoendoproteolytic cleavage occurs by a canonical serine protease mechanism, in which the side chain hydroxyl group of the serine supplies its oxygen atom to form the C-terminus of the beta chain, while the remainder of the serine residue undergoes an oxidative deamination to produce ammonia and the pyruvoyl prosthetic group on the alpha chain. During this reaction, the Ser that is part of the protease active site of the proenzyme becomes the pyruvoyl prosthetic group, which constitutes an essential element of the active site of the mature decarboxylase.

The protein resides in the cell membrane. It carries out the reaction a 1,2-diacyl-sn-glycero-3-phospho-L-serine + H(+) = a 1,2-diacyl-sn-glycero-3-phosphoethanolamine + CO2. The protein operates within phospholipid metabolism; phosphatidylethanolamine biosynthesis; phosphatidylethanolamine from CDP-diacylglycerol: step 2/2. Its function is as follows. Catalyzes the formation of phosphatidylethanolamine (PtdEtn) from phosphatidylserine (PtdSer). In Coxiella burnetii (strain Dugway 5J108-111), this protein is Phosphatidylserine decarboxylase proenzyme.